We begin with the raw amino-acid sequence, 892 residues long: Translation initiation factor IF-2 (892 aa).

2 disordered regions span residues Leu-32–Ala-102 and Lys-114–Glu-300. Polar residues predominate over residues Ala-35–Ala-48. Positions Gln-139–Pro-166 are enriched in basic and acidic residues. Residues Ala-200 to Pro-211 are compositionally biased toward low complexity. The span at Arg-212–Gln-224 shows a compositional bias: polar residues. A compositionally biased stretch (low complexity) spans Pro-225 to Ser-238. Residues Arg-252 to Gly-276 are compositionally biased toward basic and acidic residues. One can recognise a tr-type G domain in the interval Ile-397–Lys-566. The interval Gly-406–Thr-413 is G1. Gly-406–Thr-413 lines the GTP pocket. The segment at Ala-431–His-435 is G2. Residues Asp-452–Gly-455 are G3. GTP is bound by residues Asp-452–His-456 and Asn-506–Asp-509. The segment at Asn-506–Asp-509 is G4. Residues Ser-542–Lys-544 form a G5 region.

It belongs to the TRAFAC class translation factor GTPase superfamily. Classic translation factor GTPase family. IF-2 subfamily.

It localises to the cytoplasm. Its function is as follows. One of the essential components for the initiation of protein synthesis. Protects formylmethionyl-tRNA from spontaneous hydrolysis and promotes its binding to the 30S ribosomal subunits. Also involved in the hydrolysis of GTP during the formation of the 70S ribosomal complex. The chain is Translation initiation factor IF-2 from Chlamydia trachomatis serovar A (strain ATCC VR-571B / DSM 19440 / HAR-13).